Consider the following 529-residue polypeptide: Pheophorbide a oxygenase, chloroplastic (529 aa).

Disordered stretches follow at residues 1 to 24 (MPVM…RRVP) and 46 to 72 (LRVA…TSSA). A chloroplast-targeting transit peptide spans 1–47 (MPVMAPTASLLLSPRPLPASRRVPSLPALSASGRLRLRRARADTRLR). The region spanning 82–194 (WYPVSLVEDL…TLVSQGLLFV (113 aa)) is the Rieske domain. Positions 124, 126, 144, and 147 each coordinate [2Fe-2S] cluster.

[2Fe-2S] cluster is required as a cofactor. As to expression, expressed in leaves. Expressed at low levels in roots, stems, panicles and seeds.

It localises to the plastid. The protein resides in the chloroplast. It catalyses the reaction pheophorbide a + 2 reduced [2Fe-2S]-[ferredoxin] + O2 + 2 H(+) = red chlorophyll catabolite + 2 oxidized [2Fe-2S]-[ferredoxin]. Its pathway is porphyrin-containing compound metabolism; chlorophyll degradation. In terms of biological role, catalyzes the key reaction of chlorophyll catabolism, porphyrin macrocycle cleavage of pheophorbide a (pheide a) to a primary fluorescent catabolite (pFCC). Works in a two-step reaction with red chlorophyll catabolite reductase (RCCR). Creates the intermediate RCC through the opening of the porphyrin macrocycle by the introduction of one atom of molecular oxygen at the alpha-methine bridge. Seems to be specific for pheide a. Belongs to the chlorophyll catabolic enzymes (CCEs). May play a role in senescence and response to wounding. The sequence is that of Pheophorbide a oxygenase, chloroplastic from Oryza sativa subsp. japonica (Rice).